A 406-amino-acid chain; its full sequence is MSEKVVLAYSGGLDTSAAVKWLQEKYGMDVIAVTIDVGNEKDFTLIKEKALKVGAKKAYVRDVRKEFAEDYIWKAIKANSMYEGVYPLATALARPLIAKVMVDIALEEGATAIAHGCTGKGNDQVRFDVGINTLAPHLKIIAPARQWGMTREQTMEYAQKWGIPVPISVKNPFSIDENLWGRSIECGLLEDPWNEPIPEVFAWTRPVEETPDEPEYLEVEFEQGVPVAVNGEKLSPLALIQKVHDIASLHGVGRIDHVENRLVGIKSREIYEAPAAVVLIAAHQALEAMTLSKSQLRFKQMVEATYSDIIYNGLWFSALRQDLDAFIDSSQRFVSGTVRLKLSKGSFRVVGRKSPYSLYHKGMATYDKGDQFDPSSAVGFITLWGLQAKLQAQLQPILEEEKGNKS.

Residue 8–16 participates in ATP binding; the sequence is AYSGGLDTS. Tyr86 is an L-citrulline binding site. Gly116 serves as a coordination point for ATP. Thr118, Asn122, and Asp123 together coordinate L-aspartate. An L-citrulline-binding site is contributed by Asn122. L-citrulline-binding residues include Arg126, Ser174, Ser183, Glu259, and Tyr271.

Belongs to the argininosuccinate synthase family. Type 1 subfamily. Homotetramer.

It is found in the cytoplasm. It carries out the reaction L-citrulline + L-aspartate + ATP = 2-(N(omega)-L-arginino)succinate + AMP + diphosphate + H(+). It functions in the pathway amino-acid biosynthesis; L-arginine biosynthesis; L-arginine from L-ornithine and carbamoyl phosphate: step 2/3. The sequence is that of Argininosuccinate synthase from Dehalococcoides mccartyi (strain ATCC BAA-2100 / JCM 16839 / KCTC 5957 / BAV1).